Here is a 492-residue protein sequence, read N- to C-terminus: Ethanolamine-phosphate phospho-lyase (492 aa).

At lysine 280 the chain carries N6-(pyridoxal phosphate)lysine. Residues 462–492 (ASDENGLVHPSNGNSHKHTSTIPLSKKTKRN) form a disordered region.

The protein belongs to the class-III pyridoxal-phosphate-dependent aminotransferase family. In terms of assembly, homotetramer. Pyridoxal 5'-phosphate serves as cofactor.

Its subcellular location is the mitochondrion. The catalysed reaction is phosphoethanolamine + H2O = acetaldehyde + NH4(+) + phosphate. Functionally, catalyzes the pyridoxal-phosphate-dependent breakdown of phosphoethanolamine, converting it to ammonia, inorganic phosphate and acetaldehyde. The chain is Ethanolamine-phosphate phospho-lyase (etnppl) from Danio rerio (Zebrafish).